The primary structure comprises 986 residues: MATTRLLFLLVVAVMITMVRSATLHYNPTVINLDRGRPKLHIGMLTSWTNADNSQGTGFPSAGAFPLAIQYANNDMDILHGYDINFEWVDTHCDINLGMAAISDWWKRGFLGVIGPGCGCTYEGRLASALNFPMIDYACDENPVSNKEFYPTFLRTIPPSIQVVDSILLTLDMYDWNQVTVVVENITKYRNVFNTMKEQFDMREEWEILHEEYYAGFDPWDPDAAEPFTDIIQRTKKTTRIYVFFGDSGDLRQFAISALDVGILNSGDYAIVGAVIDLEIRDSQDYHSLEYTLEASDYLEQINQAYEQMFKLREYTRTDDERALEAMKSVLIVTGEPVLRSQAWHIYSAIVIDNALDEPFNGTLELKTDIDMASVYIFDATTELLKALDATLQAGGDMYDGSQVVSNLFNTSYRSKAKADYQFDENGDGVKSYVLLHRIPIPVGDGGMPPGSPGMYPIGTFVRAESGHWSFNKDPDLNPVWHNRDDPPLDMPVCGFHGELCTNWGLYLGTLIPAFIIIFGGGLGYYIYRKRAYEAALDSLVWKVDWKEVQTRESETNSQGFSMKSMVLSAISVISNAEKQQIFATIGTYRGTICAIHAVHKNHIDLTRAVRTELKLMRDMRHDNICPFIGACIDRPHICILMHYCAKGSLQDIMENDDIKLDSMFLASLIADLVKGLVYLHSSEIKSHGHLKSSNCVVDNRWVLQITDYGLHEFRKGQKEDVDLGEHAKLARKLWTAPEHLREGKSMHPGGTPKGDIYSFSIILTEMYSRQEPFHENDLELADIIARVSKGEVPPYRPVLNAVNEAAPDCVLTAIRACWVEDPMERPNIIEVRTMLAPLQKGLKPNILDNMIAIMERYTNNLEELVDERTQELQKEKAKTEQLLHRMLPPSIASQLIKGISVLPETFDMVSIFFSDIVGFLIHFSLSSCRLFCSSQVLPLLVPWLHSLLTLPLHLPLIWMNPLISSFAQPSWSALHSHSCSALHSS.

Positions 1 to 21 are cleaved as a signal peptide; that stretch reads MATTRLLFLLVVAVMITMVRS. Over 22–507 the chain is Extracellular; it reads ATLHYNPTVI…GELCTNWGLY (486 aa). N-linked (GlcNAc...) asparagine glycans are attached at residues asparagine 185, asparagine 361, and asparagine 410. Residues 508 to 528 form a helical membrane-spanning segment; that stretch reads LGTLIPAFIIIFGGGLGYYIY. Over 529 to 986 the chain is Cytoplasmic; sequence RKRAYEAALD…SHSCSALHSS (458 aa). Residues 568 to 836 form the Protein kinase domain; it reads LSAISVISNA…PNIIEVRTML (269 aa).

The protein resides in the membrane. The catalysed reaction is GTP = 3',5'-cyclic GMP + diphosphate. Implicated as a cell-surface receptor on spermatozoa for 'resact' a chemotactic peptide, and on various other cells as a receptor for atrial natriuretic peptide. In Arbacia punctulata (Punctuate sea urchin), this protein is Resact receptor.